Consider the following 434-residue polypeptide: GTPase Obg (434 aa).

In terms of domain architecture, Obg spans methionine 1–leucine 158. Residues alanine 159–aspartate 336 form the OBG-type G domain. Residues glycine 165–serine 172, phenylalanine 190–valine 194, aspartate 212–glycine 215, asparagine 282–aspartate 285, and serine 317–leucine 319 each bind GTP. The Mg(2+) site is built by serine 172 and threonine 192. An OCT domain is found at glycine 356 to aspartate 434.

Belongs to the TRAFAC class OBG-HflX-like GTPase superfamily. OBG GTPase family. As to quaternary structure, monomer. Requires Mg(2+) as cofactor.

The protein resides in the cytoplasm. An essential GTPase which binds GTP, GDP and possibly (p)ppGpp with moderate affinity, with high nucleotide exchange rates and a fairly low GTP hydrolysis rate. Plays a role in control of the cell cycle, stress response, ribosome biogenesis and in those bacteria that undergo differentiation, in morphogenesis control. This chain is GTPase Obg, found in Streptococcus pneumoniae (strain ATCC 700669 / Spain 23F-1).